We begin with the raw amino-acid sequence, 482 residues long: High affinity 3',5'-cyclic-AMP phosphodiesterase 7A (482 aa).

Position 84 is a phosphoserine (Ser-84). The 323-residue stretch at 136–458 folds into the PDEase domain; sequence LDDDYNGQAK…ASWKGLQREQ (323 aa). His-212 (proton donor) is an active-site residue. Residues His-216, His-252, Asp-253, and Asp-362 each contribute to the a divalent metal cation site.

This sequence belongs to the cyclic nucleotide phosphodiesterase family. PDE7 subfamily. In terms of assembly, interacts with CBFA2T3. Requires a divalent metal cation as cofactor. In terms of tissue distribution, found at high levels in skeletal muscle and at low levels in a variety of tissues including brain and heart. It is expressed as well in two T-cell lines. As to expression, found abundantly in skeletal muscle and at low levels in heart.

Its subcellular location is the cytoplasm. It localises to the cytosol. It carries out the reaction 3',5'-cyclic AMP + H2O = AMP + H(+). It participates in purine metabolism; 3',5'-cyclic AMP degradation; AMP from 3',5'-cyclic AMP: step 1/1. With respect to regulation, insensitive to all selective PDE inhibitors. Functionally, hydrolyzes the second messenger cAMP, which is a key regulator of many important physiological processes. May have a role in muscle signal transduction. The protein is High affinity 3',5'-cyclic-AMP phosphodiesterase 7A of Homo sapiens (Human).